Here is a 77-residue protein sequence, read N- to C-terminus: MLRLITAAVLVSACLAYPQKKRTPPQTRPTSRALVSQCRPCPTCRECKCRECKCRECQCRIHSCLSAWDSRGIWMRT.

An N-terminal signal peptide occupies residues 1–16 (MLRLITAAVLVSACLA). Positions 17 to 32 (YPQKKRTPPQTRPTSR) are excised as a propeptide.

It belongs to the conotoxin B2 family. In terms of processing, contains 5 disulfide bonds. As to expression, expressed by the venom duct.

The protein localises to the secreted. The chain is Conotoxin Mr8.2 from Conus marmoreus (Marble cone).